The following is a 461-amino-acid chain: UDP-glucose 6-dehydrogenase TuaD (461 aa).

NAD(+) contacts are provided by residues K3–F20, V12, D31, K36, T122, and E156. Residues E152–E156, K205, N209, F250–G254, and G258 contribute to the substrate site. Catalysis depends on C261, which acts as the Nucleophile. K264 lines the NAD(+) pocket. Residue K321 participates in substrate binding. R328 lines the NAD(+) pocket.

The protein belongs to the UDP-glucose/GDP-mannose dehydrogenase family. In terms of processing, phosphorylated by YwqD and dephosphorylated by YwqE in vitro.

The protein resides in the cytoplasm. The catalysed reaction is UDP-alpha-D-glucose + 2 NAD(+) + H2O = UDP-alpha-D-glucuronate + 2 NADH + 3 H(+). Its pathway is nucleotide-sugar biosynthesis; UDP-alpha-D-glucuronate biosynthesis; UDP-alpha-D-glucuronate from UDP-alpha-D-glucose: step 1/1. Its activity is regulated as follows. Activated by phosphorylation; inhibited by dephosphorylation. Its function is as follows. Catalyzes the conversion of UDP-glucose into UDP-glucuronate, one of the precursors of teichuronic acid. This is UDP-glucose 6-dehydrogenase TuaD (tuaD) from Bacillus subtilis (strain 168).